Consider the following 333-residue polypeptide: MKDYIRRVSDGEDLTQAEAREAASLVFEEATEAQIGALLSALRAKGETEPEIAGFAEGMRAAARRIDPDRSPLVDTCGTGGDGHDTINVSTTSSFVVAGAGVPVAKHGNYSVSSSSGSADVLEEIGVTIDAEPPAVETCIEETGMGFMLAPVFHPAMKAVIGPRKELGMRTIFNVLGPLTNPADADAQVVGVYDEALVPTLADALSRMSVDRALVVHGAGLDEIGVHGESTVAEVDGESVEQYTVTPSDLGVDSHDLSAVAGGSPTENAADMRGILEGDVEGAKRDIILANAGAAIYIAGEADSLAAGVDAARESIDTGAAAAQLASLREFEP.

5-phospho-alpha-D-ribose 1-diphosphate contacts are provided by residues Gly-78, 81–82 (GD), Thr-86, 88–91 (NVST), 106–114 (KHGNYSVSS), and Ser-118. Gly-78 contacts anthranilate. Ser-90 is a Mg(2+) binding site. Anthranilate is bound at residue Asn-109. Arg-164 contacts anthranilate. 2 residues coordinate Mg(2+): Asp-222 and Glu-223.

This sequence belongs to the anthranilate phosphoribosyltransferase family. As to quaternary structure, homodimer. Requires Mg(2+) as cofactor.

It carries out the reaction N-(5-phospho-beta-D-ribosyl)anthranilate + diphosphate = 5-phospho-alpha-D-ribose 1-diphosphate + anthranilate. The protein operates within amino-acid biosynthesis; L-tryptophan biosynthesis; L-tryptophan from chorismate: step 2/5. Catalyzes the transfer of the phosphoribosyl group of 5-phosphorylribose-1-pyrophosphate (PRPP) to anthranilate to yield N-(5'-phosphoribosyl)-anthranilate (PRA). This Natronomonas pharaonis (strain ATCC 35678 / DSM 2160 / CIP 103997 / JCM 8858 / NBRC 14720 / NCIMB 2260 / Gabara) (Halobacterium pharaonis) protein is Anthranilate phosphoribosyltransferase.